A 102-amino-acid chain; its full sequence is Secreted RxLR effector protein 61 (102 aa).

The first 22 residues, 1–22 (MAFQLRIVQHLLHITFLRLPLA), serve as a signal peptide directing secretion. The RxLR-dEER motif lies at 51–60 (RRLRQLNEHR).

Belongs to the RxLR effector family.

It localises to the secreted. The protein resides in the host chloroplast envelope. It is found in the host cytoplasm. Its subcellular location is the host nucleus. Effector that partially suppresses the tobacco programmed cell death induced by cell death-inducing proteins. In Plasmopara viticola (Downy mildew of grapevine), this protein is Secreted RxLR effector protein 61.